A 522-amino-acid polypeptide reads, in one-letter code: Echinocystic acid 23-monooxygenase (522 aa).

Residues 4 to 24 (LPYIATSIACIVILRWALNMM) traverse the membrane as a helical; Signal-anchor for type II membrane protein segment. Residue N190 is glycosylated (N-linked (GlcNAc...) asparagine). C470 is a heme binding site.

It belongs to the cytochrome P450 family. It depends on heme as a cofactor. Mainly expressed in flowers and flower buds, to a lesser extent in young leaves and, at low levels, in old leaves, stems and roots.

The protein localises to the membrane. It functions in the pathway secondary metabolite biosynthesis; terpenoid biosynthesis. Functionally, component of the oleanane-type triterpene saponins (e.g. saponarioside A and saponarioside B) biosynthetic pathway, leading to the production of natural products with detergent properties used as traditional sources of soap. An oxidoreductase that facilitates the oxidation of the methyl group to a carboxyl group at the C-23 position of echinocystic acid, resulting in the formation of quillaic acid (QA). This chain is Echinocystic acid 23-monooxygenase, found in Saponaria officinalis (Common soapwort).